The sequence spans 488 residues: Bifunctional protein HldE (488 aa).

Residues 1-330 (MIDFDGLSNA…RNILPPASLA (330 aa)) form a ribokinase region. An ATP-binding site is contributed by 205 to 208 (NSKE). Asp-275 is a catalytic residue. The cytidylyltransferase stretch occupies residues 358–488 (FTNGCFDILH…TSLVKRAGGA (131 aa)).

It in the N-terminal section; belongs to the carbohydrate kinase PfkB family. The protein in the C-terminal section; belongs to the cytidylyltransferase family. Homodimer.

It catalyses the reaction D-glycero-beta-D-manno-heptose 7-phosphate + ATP = D-glycero-beta-D-manno-heptose 1,7-bisphosphate + ADP + H(+). The catalysed reaction is D-glycero-beta-D-manno-heptose 1-phosphate + ATP + H(+) = ADP-D-glycero-beta-D-manno-heptose + diphosphate. It functions in the pathway nucleotide-sugar biosynthesis; ADP-L-glycero-beta-D-manno-heptose biosynthesis; ADP-L-glycero-beta-D-manno-heptose from D-glycero-beta-D-manno-heptose 7-phosphate: step 1/4. Its pathway is nucleotide-sugar biosynthesis; ADP-L-glycero-beta-D-manno-heptose biosynthesis; ADP-L-glycero-beta-D-manno-heptose from D-glycero-beta-D-manno-heptose 7-phosphate: step 3/4. Catalyzes the phosphorylation of D-glycero-D-manno-heptose 7-phosphate at the C-1 position to selectively form D-glycero-beta-D-manno-heptose-1,7-bisphosphate. Functionally, catalyzes the ADP transfer from ATP to D-glycero-beta-D-manno-heptose 1-phosphate, yielding ADP-D-glycero-beta-D-manno-heptose. The sequence is that of Bifunctional protein HldE from Nitrobacter winogradskyi (strain ATCC 25391 / DSM 10237 / CIP 104748 / NCIMB 11846 / Nb-255).